The chain runs to 634 residues: ABC transporter B family member 29, chloroplastic (634 aa).

A chloroplast-targeting transit peptide spans 1–51; it reads MSFLLLTPPPCLLIPPPPLSHRRSSSLFLKHPFQPSPRPLSFCKPSALRLR. Transmembrane regions (helical) follow at residues 75 to 95, 119 to 139, 195 to 215, 219 to 239, 307 to 327, and 330 to 350; these read TVLLGWLCSCVSVVSLSQIVP, LVLAGLVLAKVVAYYLQQAFL, LLNTVVPSAIQISVMTAHMIV, ALTLVSAMVIPSVALLIAYLG, IVQVMYLGSLSIFCVGAVILA, and SLSSSAIVSFVASLAFLIDPV. The ABC transmembrane type-1 domain maps to 77 to 362; it reads LLGWLCSCVS…LGKAYNELKQ (286 aa). The ABC transporter domain occupies 396–633; that stretch reads VELCDISFKY…KDSLTSAGLV (238 aa). 430 to 437 is an ATP binding site; the sequence is GPSGGGKT.

The protein belongs to the ABC transporter superfamily. ABCB family. Multidrug resistance exporter (TC 3.A.1.201) subfamily.

The protein resides in the plastid. It is found in the chloroplast membrane. The sequence is that of ABC transporter B family member 29, chloroplastic (ABCB29) from Arabidopsis thaliana (Mouse-ear cress).